Consider the following 1189-residue polypeptide: Increased DNA methylation 1 (1189 aa).

2 disordered regions span residues 475-498 (KNLHRRSKKISDIKPASLDQHDSL) and 523-597 (SRDE…CRLL). Positions 523–532 (SRDERLRNEK) are enriched in basic and acidic residues. Composition is skewed to basic residues over residues 541-550 (KKGRKKARKH) and 565-590 (NKGKFSRSSQKKKTQKPKARTKKRNN). A PHD-type 1 zinc finger spans residues 726 to 771 (DDSCGVCGDGGELICCDNCPSTFHQACLSMQVLPEGSWYCSSCTCW). Residues 767–823 (SCTCWICSELVSDNAERSQDFKCSQCAHKYHGTCLQGISKRRKLFPETYFCGKNCEK) form a PHD-type 2; degenerate zinc finger. The 146-residue stretch at 879-1024 (MEESFLSMVD…GTTLLKKTLY (146 aa)) folds into the N-acetyltransferase domain. A disordered region spans residues 1031–1157 (TMKGVCLSKE…SSSSAALEEV (127 aa)). Basic and acidic residues-rich tracts occupy residues 1038–1050 (SKERNNPSNKEAD), 1102–1114 (NPSRDSNANDRPN), and 1129–1145 (CLQKDVSKLSEEGKETT). A compositionally biased stretch (low complexity) spans 1147-1157 (ASSSSAALEEV).

In terms of assembly, interacts (via N-terminus) with IDM2. Interacts with IMD3. Part of a complex made of MBD7, IDM1, IDM2 and IDM3. In terms of tissue distribution, expressed in cotyledons and hypocotyls in young seedlings.

Its subcellular location is the nucleus. In terms of biological role, histone H3 acetyltransferase that binds methylated DNA at chromatin sites lacking histone H3K4 di- or trimethylation and catalyzes H3K18 and H3K23 acetylation. Prevents the transcriptional silencing of transgenes and of some endogenous genes. Requires the presence of IDM2 for efficient H3K18 acetylation, but not for H3K23 acetylation. In Arabidopsis thaliana (Mouse-ear cress), this protein is Increased DNA methylation 1.